Consider the following 166-residue polypeptide: Large ribosomal subunit protein uL10 (166 aa).

This sequence belongs to the universal ribosomal protein uL10 family. In terms of assembly, part of the ribosomal stalk of the 50S ribosomal subunit. The N-terminus interacts with L11 and the large rRNA to form the base of the stalk. The C-terminus forms an elongated spine to which L12 dimers bind in a sequential fashion forming a multimeric L10(L12)X complex.

Its function is as follows. Forms part of the ribosomal stalk, playing a central role in the interaction of the ribosome with GTP-bound translation factors. The chain is Large ribosomal subunit protein uL10 from Shewanella amazonensis (strain ATCC BAA-1098 / SB2B).